Here is a 580-residue protein sequence, read N- to C-terminus: Negative elongation factor B (580 aa).

Lys-519 carries the N6-acetyllysine modification. The interval 552 to 580 (DHRKPSPTQAAETPALDLPLPSVPAPATL) is disordered. A Phosphoserine modification is found at Ser-557.

This sequence belongs to the NELF-B family. As to quaternary structure, the NELF complex is composed of NELFA, NELFB, NELFCD and NELFE; the N-terminus of NELFB binds to the NELFA:NELFCD subcomplex. Binds RNA which may help to stabilize the NELF complex on nucleic acid Interacts with the first BRCT repeat of BRCA1. Interacts with KIAA1191. Isoform 1 and isoform 2 interact with NELFA, NELFCD and NELFE. Isoform 1 is expressed in the kidney, liver, adipose and lung. Isoform 2 is widely expressed.

It localises to the nucleus. Essential component of the NELF complex, a complex that negatively regulates the elongation of transcription by RNA polymerase II (Pol II). The NELF complex, which acts via an association with the DSIF complex and causes transcriptional pausing, is counteracted by the P-TEFb kinase complex. May be able to induce chromatin unfolding. Essential for early embryogenesis; plays an important role in maintaining the undifferentiated state of embryonic stem cells (ESCs) by preventing unscheduled expression of developmental genes. Plays a key role in establishing the responsiveness of stem cells to developmental cues; facilitates plasticity and cell fate commitment in ESCs by establishing the appropriate expression level of signaling molecules. Supports the transcription of genes involved in energy metabolism in cardiomyocytes; facilitates the association of transcription initiation factors with the promoters of the metabolism-related genes. The protein is Negative elongation factor B (Nelfb) of Mus musculus (Mouse).